A 198-amino-acid polypeptide reads, in one-letter code: Ribonuclease HII (198 aa).

Residues 10-198 (HLVAGVDEVG…PVKRALGLVS (189 aa)) form the RNase H type-2 domain. Residues aspartate 16, glutamate 17, and aspartate 108 each contribute to the a divalent metal cation site.

This sequence belongs to the RNase HII family. The cofactor is Mn(2+). Mg(2+) is required as a cofactor.

It is found in the cytoplasm. The enzyme catalyses Endonucleolytic cleavage to 5'-phosphomonoester.. Functionally, endonuclease that specifically degrades the RNA of RNA-DNA hybrids. In Salmonella paratyphi A (strain AKU_12601), this protein is Ribonuclease HII.